We begin with the raw amino-acid sequence, 615 residues long: MPIQVLPPQLANQIAAGEVVERPASVVKELVENSLDAGATRIDIDIERGGAKLIRIRDNGCGIKKDELALALARHATSKIASLDDLEAIISLGFRGEALASISSVSRLTLTSRIAEQQEAWQAYAEGRDMDVTVKPAAHPVGTTLEVLDLFYNTPARRKFLRTEKTEFNHIDEIIRRIALARFDVTINLSHNGKIVRQYRAVPEGGQKERRLGAICGTAFLEQALAIEWQHGDLTLRGWVADPNHTTPALAEIQYCYVNGRMMRDRLINHAIRQACEDKLGADQQPAFVLYLEIDPHQVDVNVHPAKHEVRFHQSRLVHDFIYQGVLSVLQQQLETPLPLDDDPQPAPRAIPENRVAAGRNHFAEPAVREPVAPRYTPAPASGSRPAAPWPNAQPGYQKQQGEVYRQLLQTPAPMQKPKAPEPQEPALAANSQSFGRVLTIVHSDCALLERGGNISLLALPVAERWLRQAQLTPGEAPVCAQPLLIPLRLKVSGEEKSALEKAQSALAELGIDFQSDAQHVTIRAVPLPLRQQNLQILIPELIGYLAKQSVFEPGNIAQWIARNLMSEHAQWSMAQAITLLADVERLCPQLVKTPPGGLLQSVDLHPAIKALKDE.

The disordered stretch occupies residues 362–397; sequence HFAEPAVREPVAPRYTPAPASGSRPAAPWPNAQPGY. Over residues 378–391 the composition is skewed to low complexity; sequence PAPASGSRPAAPWP.

This sequence belongs to the DNA mismatch repair MutL/HexB family.

In terms of biological role, this protein is involved in the repair of mismatches in DNA. It is required for dam-dependent methyl-directed DNA mismatch repair. May act as a 'molecular matchmaker', a protein that promotes the formation of a stable complex between two or more DNA-binding proteins in an ATP-dependent manner without itself being part of a final effector complex. This is DNA mismatch repair protein MutL from Escherichia coli O17:K52:H18 (strain UMN026 / ExPEC).